Reading from the N-terminus, the 309-residue chain is Homoserine kinase (309 aa).

Residue 91 to 101 (PIGSGLGSSAC) coordinates ATP.

Belongs to the GHMP kinase family. Homoserine kinase subfamily.

It localises to the cytoplasm. The catalysed reaction is L-homoserine + ATP = O-phospho-L-homoserine + ADP + H(+). Its pathway is amino-acid biosynthesis; L-threonine biosynthesis; L-threonine from L-aspartate: step 4/5. Functionally, catalyzes the ATP-dependent phosphorylation of L-homoserine to L-homoserine phosphate. This is Homoserine kinase from Pectobacterium atrosepticum (strain SCRI 1043 / ATCC BAA-672) (Erwinia carotovora subsp. atroseptica).